Here is a 231-residue protein sequence, read N- to C-terminus: Acyl-protein thioesterase 2 (231 aa).

Cysteine 2 carries the S-palmitoyl cysteine lipid modification. Position 82 is a phosphoserine (serine 82). Active-site charge relay system residues include serine 122, aspartate 176, and histidine 210.

The protein belongs to the AB hydrolase superfamily. AB hydrolase 2 family. As to expression, expressed in various breast cancer cell lines.

It is found in the cytoplasm. It catalyses the reaction S-hexadecanoyl-L-cysteinyl-[protein] + H2O = L-cysteinyl-[protein] + hexadecanoate + H(+). The catalysed reaction is prostaglandin E2 1-glyceryl ester + H2O = prostaglandin E2 + glycerol + H(+). It carries out the reaction 1-hexadecanoyl-sn-glycero-3-phosphocholine + H2O = sn-glycerol 3-phosphocholine + hexadecanoate + H(+). The enzyme catalyses 1-octadecanoyl-sn-glycero-3-phosphocholine + H2O = octadecanoate + sn-glycerol 3-phosphocholine + H(+). It catalyses the reaction 1-hexadecanoyl-sn-glycero-3-phosphate + H2O = sn-glycerol 3-phosphate + hexadecanoate + H(+). The catalysed reaction is 1-hexadecanoyl-sn-glycero-3-phospho-L-serine + H2O = sn-glycero-3-phospho-L-serine + hexadecanoate + H(+). Its activity is regulated as follows. Inhibited by compound 1 or (5,5-Dioxido-4H-thieno[3,2-c]thiochromen-2-yl)(4-(4-methoxyphenyl)piperazin-1-yl)methanone. Acts as an acyl-protein thioesterase hydrolyzing fatty acids from S-acylated cysteine residues in proteins such as trimeric G alpha proteins, GSDMD, GAP43, ZDHHC6 or HRAS. Deacylates GAP43. Mediates depalmitoylation of ZDHHC6. Has lysophospholipase activity. Hydrolyzes prostaglandin glycerol esters (PG-Gs) in the following order prostaglandin D2-glycerol ester (PGD2-G) &gt; prostaglandin E2 glycerol ester (PGE2-G) &gt; prostaglandin F2-alpha-glycerol ester (PGF2-alpha-G). Hydrolyzes 1-arachidonoylglycerol but not 2-arachidonoylglycerol or arachidonoylethanolamide. In Homo sapiens (Human), this protein is Acyl-protein thioesterase 2 (LYPLA2).